We begin with the raw amino-acid sequence, 318 residues long: Retinol dehydrogenase 5 (318 aa).

The helical transmembrane segment at 1-23 threads the bilayer; it reads MWLPLLLGALLWAVLWLLRDRQS. Topologically, residues 24–288 are lumenal; it reads LPASDAFIFI…TRYSPGWDAK (265 aa). 32–56 is a binding site for NADP(+); that stretch reads FITGCDSGFGRLLALQLDQKGFQVL. S163 is a substrate binding site. Y175 acts as the Proton acceptor in catalysis. Residues 289–309 form a helical membrane-spanning segment; that stretch reads LLWLPASYLPARVVDAVLTWI. Residues 310–318 lie on the Cytoplasmic side of the membrane; that stretch reads LPRPAQSVS.

It belongs to the short-chain dehydrogenases/reductases (SDR) family. Homodimer. In terms of tissue distribution, expressed in eye, liver, kidney, brain, intestine, placenta, epididymus and submaxillary gland. In eye, strongly expressed in the retinal pigment epithelium, with lower expression levels detected in the inner segment of the photoreceptor cells and in the outer plexiform layer. In kidney, strong expression detected in the distal tubules and the transitional epithelium in the renal pelvis, with weaker expression detected in the epithelium of the outer stripe of the outer zone of the medulla. In liver, detected in hepatocytes in the centrilobular area. In lung, present in club cells in the epithelium of the bronchiole, in parenchyma and in cartilage surrounding the secondary bronchi. In skin, expressed in epidermis, hair follicles and mast cells in the dermis. Expressed in heart. Not detected in heart. Not detected in lung, spleen, skeletal muscle and testis.

It is found in the endoplasmic reticulum membrane. It carries out the reaction 11-cis-retinol + NAD(+) = 11-cis-retinal + NADH + H(+). The enzyme catalyses 9-cis-retinol + NAD(+) = 9-cis-retinal + NADH + H(+). It catalyses the reaction 13-cis-retinol + NAD(+) = 13-cis-retinal + NADH + H(+). The catalysed reaction is androsterone + NAD(+) = 5alpha-androstan-3,17-dione + NADH + H(+). It carries out the reaction 5alpha-androstane-3alpha,17beta-diol + NAD(+) = 17beta-hydroxy-5alpha-androstan-3-one + NADH + H(+). It functions in the pathway cofactor metabolism; retinol metabolism. Its activity is regulated as follows. Inhibited by 9-cis-, 13-cis- and all-trans-retinoic acids, with the most potent inhibitor being 13-cis-retinoic acid. Weakly inhibited by oleic acid. Its function is as follows. Catalyzes the oxidation of cis-isomers of retinol, including 11-cis-, 9-cis-, and 13-cis-retinol in an NAD-dependent manner. Has no activity towards all-trans retinal. Plays a significant role in 11-cis retinol oxidation in the retinal pigment epithelium cells (RPE). Also recognizes steroids (androsterone, androstanediol) as its substrates. The polypeptide is Retinol dehydrogenase 5 (Mus musculus (Mouse)).